Here is a 210-residue protein sequence, read N- to C-terminus: Scoloptoxin SSD552 (210 aa).

A signal peptide spans 1-23 (MNILLSSTLFVLLMFQIIGSGMG).

In terms of processing, contains 3 disulfide bonds. As to expression, expressed by the venom gland.

It is found in the secreted. This is Scoloptoxin SSD552 from Scolopendra dehaani (Thai centipede).